Consider the following 181-residue polypeptide: Lectin beta-1 and beta-2 chains (181 aa).

2 residues coordinate Mn(2+): Glu-119 and Asp-121. Ca(2+) is bound by residues Asp-121, Phe-123, Asn-125, and Asp-129. Residues Asp-129 and His-136 each contribute to the Mn(2+) site.

This sequence belongs to the leguminous lectin family. As to quaternary structure, tetramer of two alpha and two beta chains.

This is Lectin beta-1 and beta-2 chains from Lathyrus ochrus (Cyprus-vetch).